The sequence spans 955 residues: Outer capsid protein VP2 (955 aa).

Belongs to the orbivirus VP2 family.

Its subcellular location is the virion. Its function is as follows. The VP2 protein is one of the two proteins (with VP5) which constitute the virus particle outer capsid. It is the major target of the host immunogenic response. Responsible for viral attachment to target host cell, probably by binding to sialic acid. This attachment induces virion internalization predominantly through clathrin-dependent endocytosis. This is Outer capsid protein VP2 (Segment-2) from Antilocapra americana (Pronghorn).